A 3023-amino-acid polypeptide reads, in one-letter code: Genome polyprotein (3023 aa).

Residues methionine 1–asparagine 21 show a composition bias toward basic residues. An N-acetylserine; by host modification is found at serine 2. The interaction with STAT1 stretch occupies residues serine 2–lysine 23. The interval serine 2 to proline 58 is interaction with EIF2AK2/PKR. The interaction with DDX3X stretch occupies residues serine 2–arginine 59. Residues serine 2–serine 75 form a disordered region. At serine 2 to asparagine 168 the chain is on the cytoplasmic side. 2 consecutive short sequence motifs (nuclear localization signal) follow at residues proline 5–arginine 13 and proline 38–glutamine 43. A compositionally biased stretch (basic and acidic residues) spans arginine 47–glutamine 57. Residue serine 53 is modified to Phosphoserine; by host. 2 short sequence motifs (nuclear localization signal) span residues proline 58–proline 64 and proline 66–arginine 71. An important for endoplasmic reticulum and mitochondrial localization region spans residues proline 112 to alanine 152. At serine 116 the chain carries Phosphoserine; by host. The tract at residues valine 122–serine 173 is interaction with APOA2. Residues tyrosine 164–glycine 167 are important for lipid droplets localization. The chain crosses the membrane as a helical span at residues leucine 169–alanine 189. The propeptide at leucine 178–serine 191 is ER anchor for the core protein, removed in mature form by host signal peptidase. At serine 190 to glycine 359 the chain is on the lumenal side. Asparagine 196, asparagine 209, and asparagine 235 each carry an N-linked (GlcNAc...) asparagine; by host glycan. The segment at leucine 266–arginine 297 is important for fusion. An N-linked (GlcNAc...) asparagine; by host glycan is attached at asparagine 306. Residues leucine 360–serine 380 traverse the membrane as a helical segment. The Lumenal segment spans residues glycine 381 to leucine 733. The HVR1 stretch occupies residues threonine 386–glutamine 413. 3 N-linked (GlcNAc...) (high mannose) asparagine; by host glycosylation sites follow: asparagine 418, asparagine 424, and asparagine 431. 4 cysteine pairs are disulfide-bonded: cysteine 430–cysteine 554, cysteine 453–cysteine 460, cysteine 488–cysteine 496, and cysteine 505–cysteine 510. N-linked (GlcNAc...) asparagine; by host glycosylation is present at asparagine 449. The interval alanine 476–glycine 480 is HVR2. N-linked (GlcNAc...) asparagine; by host glycosylation is present at asparagine 477. Positions serine 482–proline 495 are CD81-binding 1. N-linked (GlcNAc...) asparagine; by host glycosylation occurs at asparagine 534. The tract at residues proline 546 to glycine 553 is CD81-binding 2. N-linked (GlcNAc...) asparagine; by host glycosylation occurs at asparagine 558. 4 disulfide bridges follow: cysteine 566–cysteine 571, cysteine 589–cysteine 593, cysteine 605–cysteine 628, and cysteine 615–cysteine 652. Residues asparagine 631 and asparagine 653 are each glycosylated (N-linked (GlcNAc...) (high mannose) asparagine; by host). An intrachain disulfide couples cysteine 660 to cysteine 685. The interval serine 668 to aspartate 679 is PKR/eIF2-alpha phosphorylation homology domain (PePHD). Residues leucine 734 to alanine 754 traverse the membrane as a helical segment. Residues alanine 755 to leucine 765 are Lumenal-facing. Residues serine 766–isoleucine 786 traverse the membrane as a helical segment. Over arginine 787–leucine 790 the chain is Cytoplasmic. Residues valine 791–leucine 811 traverse the membrane as a helical segment. At proline 812–glutamate 821 the chain is on the lumenal side. A helical membrane pass occupies residues aspartate 822–tryptophan 842. Residues tyrosine 843–tyrosine 889 are Cytoplasmic-facing. The helical transmembrane segment at proline 890 to isoleucine 910 threads the bilayer. Residues leucine 907–leucine 1034 form the Peptidase C18 domain. At glutamine 911–alanine 936 the chain is on the lumenal side. The segment at alanine 912 to arginine 1214 is protease NS2-3. Residue cysteine 930 is the site of S-palmitoyl cysteine; by host attachment. The chain crosses the membrane as a helical span at residues methionine 937 to leucine 957. Residues methionine 937–leucine 957 form an interaction with host SCPS1 region. The Cytoplasmic segment spans residues tyrosine 958–threonine 1665. Active-site for protease NS2 activity; shared with dimeric partner residues include histidine 960, glutamate 980, and cysteine 1001. The Peptidase S29 domain occupies serine 1035–proline 1216. Active-site charge relay system; for serine protease NS3 activity residues include histidine 1091 and aspartate 1115. Residues cysteine 1131 and cysteine 1133 each contribute to the Zn(2+) site. The active-site Charge relay system; for serine protease NS3 activity is the serine 1173. Positions 1179 and 1183 each coordinate Zn(2+). The region spanning proline 1225 to serine 1377 is the Helicase ATP-binding domain. ATP is bound at residue alanine 1238–serine 1245. 2 residues coordinate Mg(2+): serine 1245 and glutamate 1325. A DECH box motif is present at residues aspartate 1324 to histidine 1327. A Helicase C-terminal domain is found at alanine 1387–arginine 1546. The segment at glutamine 1494–isoleucine 1506 is RNA-binding. A helical transmembrane segment spans residues serine 1666–glycine 1686. An NS3-binding region spans residues cysteine 1687–glycine 1698. The Cytoplasmic portion of the chain corresponds to cysteine 1687–glutamine 1813. The helical transmembrane segment at threonine 1814 to serine 1834 threads the bilayer. Residues serine 1835 to alanine 1836 are Lumenal-facing. Residues phenylalanine 1837 to leucine 1857 traverse the membrane as a helical segment. Position 1858 (aspartate 1858) is a topological domain, cytoplasmic. Residues valine 1859 to glycine 1879 traverse the membrane as a helical segment. The Lumenal portion of the chain corresponds to glutamate 1880–asparagine 1889. The chain crosses the membrane as a helical span at residues leucine 1890–leucine 1910. Over arginine 1911–cysteine 1980 the chain is Cytoplasmic. Cysteine 1980 carries the S-palmitoyl cysteine; by host lipid modification. The stretch at asparagine 1981 to lysine 2010 is an intramembrane region. The Cytoplasmic segment spans residues valine 2011–arginine 3002. Cysteine 2019, cysteine 2037, cysteine 2039, and cysteine 2060 together coordinate Zn(2+). An FKBP8-binding region spans residues glutamate 2128–alanine 2216. The segment at glutamate 2128–threonine 2340 is transcriptional activation. Residues proline 2143–proline 2147 are interaction with non-structural protein 4A. Residues alanine 2195–serine 2218 are compositionally biased toward low complexity. The interval alanine 2195–histidine 2226 is disordered. Residues arginine 2197–glutamate 2450 are interaction with host SKP2. Phosphoserine; by host is present on residues serine 2202, serine 2205, serine 2209, serine 2212, serine 2215, and serine 2218. The ISDR stretch occupies residues serine 2218–lysine 2257. Positions serine 2218–phenylalanine 2283 are interaction with EIF2AK2/PKR. An NS4B-binding region spans residues lysine 2257 to tyrosine 2314. The V3 stretch occupies residues proline 2307 to aspartate 2385. 2 disordered regions span residues histidine 2320–aspartate 2344 and glutamate 2357–serine 2422. The SH3-binding signature appears at alanine 2330–proline 2333. A Nuclear localization signal motif is present at residues proline 2335–leucine 2343. A compositionally biased stretch (low complexity) spans glutamate 2366–glycine 2384. A phosphoserine; by host mark is found at serine 2461 and serine 2474. The RdRp catalytic domain maps to proline 2646 to aspartate 2764. Positions 2652, 2750, and 2751 each coordinate Mg(2+). A helical transmembrane segment spans residues histidine 3003 to arginine 3023.

Belongs to the hepacivirus polyprotein family. As to quaternary structure, homooligomer. Interacts with E1 (via C-terminus). Interacts with the non-structural protein 5A. Interacts (via N-terminus) with host STAT1 (via SH2 domain); this interaction results in decreased STAT1 phosphorylation and ubiquitin-mediated proteasome-dependent STAT1 degradation, leading to decreased IFN-stimulated gene transcription. Interacts with host STAT3; this interaction constitutively activates STAT3. Interacts with host LTBR receptor. Interacts with host TNFRSF1A receptor and possibly induces apoptosis. Interacts with host HNRPK. Interacts with host YWHAE. Interacts with host UBE3A/E6AP. Interacts with host DDX3X. Interacts with host APOA2. Interacts with host RXRA protein. Interacts with host SP110 isoform 3/Sp110b; this interaction sequesters the transcriptional corepressor SP110 away from the nucleus. Interacts with host CREB3 nuclear transcription protein; this interaction triggers cell transformation. Interacts with host ACY3. Interacts with host C1QR1. Interacts with host RBM24; this interaction, which enhances the interaction of the mature core protein with 5'-UTR, may inhibit viral translation and favor replication. Interacts with host EIF2AK2/PKR; this interaction induces the autophosphorylation of EIF2AK2. Part of the viral assembly initiation complex composed of NS2, E1, E2, NS3, NS4A, NS5A and the mature core protein. Forms a heterodimer with envelope glycoprotein E2. Interacts with mature core protein. Interacts with protease NS2. The heterodimer E1/E2 interacts with host CLDN1; this interaction plays a role in viral entry into host cell. Interacts with host SPSB2 (via C-terminus). Part of the viral assembly initiation complex composed of NS2, E1, E2, NS3, NS4A, NS5A and the mature core protein. Interacts with host NEURL3; this interaction prevents E1 binding to glycoprotein E2. In terms of assembly, forms a heterodimer with envelope glycoprotein E1. Interacts with host CD81 and SCARB1 receptors; these interactions play a role in viral entry into host cell. Interacts with host EIF2AK2/PKR; this interaction inhibits EIF2AK2 and probably allows the virus to evade the innate immune response. Interacts with host CD209/DC-SIGN and CLEC4M/DC-SIGNR. Interact with host SPCS1; this interaction is essential for viral particle assembly. Interacts with protease NS2. The heterodimer E1/E2 interacts with host CLDN1; this interaction plays a role in viral entry into host cell. Part of the viral assembly initiation complex composed of NS2, E1, E2, NS3, NS4A, NS5A and the mature core protein. Interacts with host SLC3A2/4F2hc; the interaction may facilitate viral entry into host cell. Interacts with human PLSCR1. As to quaternary structure, homohexamer. Homoheptamer. Interacts with protease NS2. Homodimer. Interacts with host SPCS1; this interaction is essential for viral particle assembly. Interacts with envelope glycoprotein E1. Interacts with envelope glycoprotein E2. Interacts with viroporin p7. Interacts with serine protease/helicase NS3. Part of the replication complex composed of NS2, NS3, NS4A, NS4B, NS5A and the RNA-directed RNA polymerase embedded in an ER-derived membranous web. Part of the viral assembly initiation complex composed of NS2, E1, E2, NS3, NS4A, NS5A and the mature core protein. In terms of assembly, interacts with protease NS2. Interacts with non-structural protein 4A; this interaction stabilizes the folding of NS3 serine protease. NS3-NS4A interaction is essential for NS3 activation and allows membrane anchorage of the latter. NS3/NS4A complex also prevents phosphorylation of host IRF3, thus preventing the establishment of dsRNA induced antiviral state. Interacts with host MAVS; this interaction leads to the cleavage and inhibition of host MAVS. Interacts with host TICAM1; this interaction leads to the cleavage and inhibition of host TICAM1. Interacts with host TANK-binding kinase/TBK1; this interaction results in the inhibition of the association between TBK1 and IRF3, which leads to the inhibition of IRF3 activation. Interacts with host RBM24. Part of the replication complex composed of NS2, NS3, NS4A, NS4B, NS5A and the RNA-directed RNA polymerase embedded in an ER-derived membranous web. Part of the viral assembly initiation complex composed of NS2, E1, E2, NS3, NS4A, NS5A and the mature core protein. As to quaternary structure, interacts with NS3 serine protease; this interaction stabilizes the folding of NS3 serine protease. NS3-NS4A interaction is essential for NS3 activation and allows membrane anchorage of the latter. Interacts with non-structural protein 5A (via N-terminus). Part of the replication complex composed of NS2, NS3, NS4A, NS4B, NS5A and the RNA-directed RNA polymerase embedded in an ER-derived membranous web. Part of the viral assembly initiation complex composed of NS2, E1, E2, NS3, NS4A, NS5A and the mature core protein. Homomultimer. Interacts with non-structural protein NS5A. Interacts with host PLA2G4C; this interaction likely initiates the recruitment of replication complexes to lipid droplets. Interacts with host STING; this interaction disrupts the interaction between STING and TBK1 thereby suppressing the interferon signaling. Part of the replication complex composed of NS2, NS3, NS4A, NS4B, NS5A and the RNA-directed RNA polymerase embedded in an ER-derived membranous web. In terms of assembly, monomer. Homodimer; dimerization is required for RNA-binding. Interacts with the mature core protein. Interacts (via N-terminus) with non-structural protein 4A. Interacts with non-structural protein 4B. Interacts (via region D2) with RNA-directed RNA polymerase. Part of the viral assembly initiation complex composed of NS2, E1, E2, NS3, NS4A, NS5A and the mature core protein. Part of the replication complex composed of NS2, NS3, NS4A, NS4B, NS5A and the RNA-directed RNA polymerase embedded in an ER-derived membranous web. Interacts with host GRB2. Interacts with host BIN1. Interacts with host PIK3R1. Interacts with host SRCAP. Interacts with host FKBP8. Interacts (via C-terminus) with host VAPB (via MSP domain). Interacts with host EIF2AK2/PKR; this interaction leads to disruption of EIF2AK2 dimerization by NS5A and probably allows the virus to evade the innate immune response. Interacts (via N-terminus) with host PACSIN2 (via N-terminus); this interaction attenuates protein kinase C alpha-mediated phosphorylation of PACSIN2 by disrupting the interaction between PACSIN2 and PRKCA. Interacts (via N-terminus) with host SRC kinase (via SH2 domain). Interacts with most Src-family kinases. Interacts with host IFI27 and SKP2; promotes the ubiquitin-mediated proteasomal degradation of NS5A. Interacts with host GPS2. Interacts with host TNFRSF21; this interaction allows the modulation by the virus of JNK, p38 MAPK, STAT3, and Akt signaling pathways in a DR6-dependent manner. Interacts (via N-terminus) with host CIDEB (via N-terminus); this interaction seems to regulate the association of HCV particles with APOE. Interacts with host CHKA/Choline Kinase-alpha; CHKA bridges host PI4KA and NS5A and potentiates NS5A-stimulated PI4KA activity, which then facilitates the targeting of the ternary complex to the ER for viral replication. Interacts with host SPSB2 (via C-terminus); this interaction targets NS5A for ubiquitination and degradation. Interacts with host RAB18; this interaction may promote the association of NS5A and other replicase components with lipid droplets. Interacts (via region D2) with host PPIA/CYPA; the interaction stimulates RNA-binding ability of NS5A and is dependent on the peptidyl-prolyl cis-trans isomerase activity of PPIA/CYPA. Interacts with host TRIM14; this interaction induces the degradation of NS5A. As to quaternary structure, homooligomer. Interacts with non-structural protein 5A. Interacts with host VAPB. Interacts with host PRK2/PKN2. Interacts with host HNRNPA1 and SEPT6; these interactions facilitate viral replication. Part of the replication complex composed of NS2, NS3, NS4A, NS4B, NS5A and the RNA-directed RNA polymerase. It depends on Zn(2+) as a cofactor. The cofactor is Mg(2+). Specific enzymatic cleavages in vivo yield mature proteins. The structural proteins, core, E1, E2 and p7 are produced by proteolytic processing by host signal peptidases. The core protein precursor is synthesized as a 23 kDa, which is retained in the ER membrane through the hydrophobic signal peptide. Cleavage by the signal peptidase releases the 21 kDa mature core protein. The cleavage of the core protein precursor occurs between aminoacids 176 and 188 but the exact cleavage site is not known. Some degraded forms of the core protein appear as well during the course of infection. The other proteins (p7, NS2, NS3, NS4A, NS4B, NS5A and NS5B) are cleaved by the viral proteases. Autoprocessing between NS2 and NS3 is mediated by the NS2 cysteine protease catalytic domain and regulated by the NS3 N-terminal domain. In terms of processing, phosphorylated by host PKC and PKA. Post-translationally, ubiquitinated; mediated by UBE3A and leading to core protein subsequent proteasomal degradation. Highly N-glycosylated. In terms of processing, palmitoylation is required for NS2/3 autoprocessing and E2 recruitment to membranes. Post-translationally, palmitoylated. This modification may play a role in its polymerization or in protein-protein interactions. Phosphorylated on serines in a basal form termed p56. p58 is a hyperphosphorylated form of p56. p56 and p58 coexist in the cell in roughly equivalent amounts. Hyperphosphorylation is dependent on the presence of NS4A. Host CSNK1A1/CKI-alpha or RPS6KB1 kinases may be responsible for NS5A phosphorylation. In terms of processing, tyrosine phosphorylation is essential for the interaction with host SRC. Post-translationally, the N-terminus is phosphorylated by host PRK2/PKN2.

The protein localises to the host endoplasmic reticulum membrane. It localises to the host mitochondrion membrane. It is found in the virion. Its subcellular location is the host cytoplasm. The protein resides in the host nucleus. The protein localises to the host lipid droplet. It localises to the virion membrane. It is found in the host mitochondrion. Its subcellular location is the host cell membrane. The protein resides in the host perinuclear region. The catalysed reaction is Hydrolysis of four peptide bonds in the viral precursor polyprotein, commonly with Asp or Glu in the P6 position, Cys or Thr in P1 and Ser or Ala in P1'.. It carries out the reaction a ribonucleoside 5'-triphosphate + H2O = a ribonucleoside 5'-diphosphate + phosphate + H(+). It catalyses the reaction ATP + H2O = ADP + phosphate + H(+). The enzyme catalyses RNA(n) + a ribonucleoside 5'-triphosphate = RNA(n+1) + diphosphate. With respect to regulation, inhibited by the antiviral drug hexamethylene amiloride. Inhibition by amantadine appears to be genotype-dependent. Also inhibited by long-alkyl-chain iminosugar derivatives. Its activity is regulated as follows. Activity is up-regulated by PRK2/PKN2-mediated phosphorylation. In terms of biological role, packages viral RNA to form a viral nucleocapsid, and promotes virion budding. Participates in the viral particle production as a result of its interaction with the non-structural protein 5A. Binds RNA and may function as a RNA chaperone to induce the RNA structural rearrangements taking place during virus replication. Modulates viral translation initiation by interacting with viral IRES and 40S ribosomal subunit. Affects various cell signaling pathways, host immunity and lipid metabolism. Prevents the establishment of cellular antiviral state by blocking the interferon-alpha/beta (IFN-alpha/beta) and IFN-gamma signaling pathways and by blocking the formation of phosphorylated STAT1 and promoting ubiquitin-mediated proteasome-dependent degradation of STAT1. Activates STAT3 leading to cellular transformation. Regulates the activity of cellular genes, including c-myc and c-fos. May repress the promoter of p53, and sequester CREB3 and SP110 isoform 3/Sp110b in the cytoplasm. Represses cell cycle negative regulating factor CDKN1A, thereby interrupting an important check point of normal cell cycle regulation. Targets transcription factors involved in the regulation of inflammatory responses and in the immune response: suppresses TNF-induced NF-kappa-B activation, and activates AP-1. Binds to dendritic cells (DCs) via C1QR1, resulting in down-regulation of T-lymphocytes proliferation. Alters lipid metabolism by interacting with hepatocellular proteins involved in lipid accumulation and storage. Induces up-regulation of FAS promoter activity, and thereby contributes to the increased triglyceride accumulation in hepatocytes (steatosis). Forms a heterodimer with envelope glycoprotein E2, which mediates virus attachment to the host cell, virion internalization through clathrin-dependent endocytosis and fusion with host membrane. Fusion with the host cell is most likely mediated by both E1 and E2, through conformational rearrangements of the heterodimer required for fusion rather than a classical class II fusion mechanism. E1/E2 heterodimer binds host apolipoproteins such as APOB and ApoE thereby forming a lipo-viro-particle (LVP). APOE associated to the LVP allows the initial virus attachment to cell surface receptors such as the heparan sulfate proteoglycans (HSPGs), syndecan-1 (SDC1), syndecan-1 (SDC2), the low-density lipoprotein receptor (LDLR) and scavenger receptor class B type I (SCARB1). The cholesterol transfer activity of SCARB1 allows E2 exposure and binding of E2 to SCARB1 and the tetraspanin CD81. E1/E2 heterodimer binding on CD81 activates the epithelial growth factor receptor (EGFR) signaling pathway. Diffusion of the complex E1-E2-EGFR-SCARB1-CD81 to the cell lateral membrane allows further interaction with Claudin 1 (CLDN1) and occludin (OCLN) to finally trigger HCV entry. Functionally, forms a heterodimer with envelope glycoprotein E1, which mediates virus attachment to the host cell, virion internalization through clathrin-dependent endocytosis and fusion with host membrane. Fusion with the host cell is most likely mediated by both E1 and E2, through conformational rearrangements of the heterodimer required for fusion rather than a classical class II fusion mechanism. The interaction between envelope glycoprotein E2 and host apolipoprotein E/APOE allows the proper assembly, maturation and infectivity of the viral particles. This interaction is probably promoted via the up-regulation of cellular autophagy by the virus. E1/E2 heterodimer binds host apolipoproteins such as APOB and APOE thereby forming a lipo-viro-particle (LVP). APOE associated to the LVP allows the initial virus attachment to cell surface receptors such as the heparan sulfate proteoglycans (HSPGs), syndecan-1 (SDC1), syndecan-1 (SDC2), the low-density lipoprotein receptor (LDLR) and scavenger receptor class B type I (SCARB1). The cholesterol transfer activity of SCARB1 allows E2 exposure and binding of E2 to SCARB1 and the tetraspanin CD81. E1/E2 heterodimer binding on CD81 activates the epithelial growth factor receptor (EGFR) signaling pathway. Diffusion of the complex E1-E2-EGFR-SCARB1-CD81 to the cell lateral membrane allows further interaction with Claudin 1 (CLDN1) and occludin (OCLN) to finally trigger HCV entry. Inhibits host EIF2AK2/PKR activation, preventing the establishment of an antiviral state. Viral ligand for CD209/DC-SIGN and CLEC4M/DC-SIGNR, which are respectively found on dendritic cells (DCs), and on liver sinusoidal endothelial cells and macrophage-like cells of lymph node sinuses. These interactions allow the capture of circulating HCV particles by these cells and subsequent facilitated transmission to permissive cells such as hepatocytes and lymphocyte subpopulations. The interaction between E2 and host amino acid transporter complex formed by SLC3A2 and SLC7A5/LAT1 may facilitate viral entry into host cell. Its function is as follows. Ion channel protein that acts as a viroporin and plays an essential role in the assembly, envelopment and secretion of viral particles. Regulates the host cell secretory pathway, which induces the intracellular retention of viral glycoproteins and favors assembly of viral particles. Creates a pore in acidic organelles and releases Ca(2+) and H(+) in the cytoplasm of infected cells, leading to a productive viral infection. High levels of cytoplasmic Ca(2+) may trigger membrane trafficking and transport of viral ER-associated proteins to viroplasms, sites of viral genome replication. This ionic imbalance induces the assembly of the inflammasome complex, which triggers the maturation of pro-IL-1beta into IL-1beta through the action of caspase-1. Targets also host mitochondria and induces mitochondrial depolarization. In addition of its role as a viroporin, acts as a lipid raft adhesion factor. In terms of biological role, cysteine protease required for the proteolytic auto-cleavage between the non-structural proteins NS2 and NS3. The N-terminus of NS3 is required for the function of NS2 protease (active region NS2-3). Promotes the initiation of viral particle assembly by mediating the interaction between structural and non-structural proteins. Displays three enzymatic activities: serine protease with a chymotrypsin-like fold, NTPase and RNA helicase. NS3 serine protease, in association with NS4A, is responsible for the cleavages of NS3-NS4A, NS4A-NS4B, NS4B-NS5A and NS5A-NS5B. The NS3/NS4A complex prevents phosphorylation of host IRF3, thus preventing the establishment of dsRNA induced antiviral state. The NS3/NS4A complex induces host amino acid transporter component SLC3A2, thus contributing to HCV propagation. NS3 RNA helicase binds to RNA and unwinds both dsDNA and dsRNA in the 3' to 5' direction, and likely resolves RNA complicated stable secondary structures in the template strand. Binds a single ATP and catalyzes the unzipping of a single base pair of dsRNA. Inhibits host antiviral proteins TBK1 and IRF3 thereby preventing the establishment of an antiviral state. Cleaves host MAVS/CARDIF thereby preventing the establishment of an antiviral state. Cleaves host TICAM1/TRIF, thereby disrupting TLR3 signaling and preventing the establishment of an antiviral state. Functionally, peptide cofactor which forms a non-covalent complex with the N-terminal of NS3 serine protease. The NS3/NS4A complex prevents phosphorylation of host IRF3, thus preventing the establishment of dsRNA induced antiviral state. The NS3/NS4A complex induces host amino acid transporter component SLC3A2, thus contributing to HCV propagation. Its function is as follows. Induces a specific membrane alteration that serves as a scaffold for the virus replication complex. This membrane alteration gives rise to the so-called ER-derived membranous web that contains the replication complex. NS4B self-interaction contributes to its function in membranous web formation. Promotes host TRIF protein degradation in a CASP8-dependent manner thereby inhibiting host TLR3-mediated interferon signaling. Disrupts the interaction between STING and TBK1 contributing to the inhibition of interferon signaling. In terms of biological role, phosphorylated protein that is indispensable for viral replication and assembly. Both hypo- and hyperphosphorylated states are required for the viral life cycle. The hyperphosphorylated form of NS5A is an inhibitor of viral replication. Involved in RNA-binding and especially in binding to the viral genome. Zinc is essential for RNA-binding. Participates in the viral particle production as a result of its interaction with the mature viral core protein. Its interaction with host VAPB may target the viral replication complex to vesicles. Down-regulates viral IRES translation initiation. Mediates interferon resistance, presumably by interacting with and inhibiting host EIF2AK2/PKR. Prevents BIN1-induced apoptosis. Acts as a transcriptional activator of some host genes important for viral replication when localized in the nucleus. Via the interaction with host PACSIN2, modulates lipid droplet formation in order to promote virion assembly. Modulates TNFRSF21/DR6 signaling pathway for viral propagation. RNA-dependent RNA polymerase that performs primer-template recognition and RNA synthesis during viral replication. Initiates RNA transcription/replication at a flavin adenine dinucleotide (FAD), resulting in a 5'- FAD cap on viral RNAs. In this way, recognition of viral 5' RNA by host pattern recognition receptors can be bypassed, thereby evading activation of antiviral pathways. This Homo sapiens (Human) protein is Genome polyprotein.